Reading from the N-terminus, the 311-residue chain is 1D-myo-inositol 2-acetamido-2-deoxy-alpha-D-glucopyranoside deacetylase (311 aa).

Zn(2+)-binding residues include histidine 29, aspartate 32, and histidine 162.

Belongs to the MshB deacetylase family. The cofactor is Zn(2+).

The catalysed reaction is 1D-myo-inositol 2-acetamido-2-deoxy-alpha-D-glucopyranoside + H2O = 1D-myo-inositol 2-amino-2-deoxy-alpha-D-glucopyranoside + acetate. In terms of biological role, catalyzes the deacetylation of 1D-myo-inositol 2-acetamido-2-deoxy-alpha-D-glucopyranoside (GlcNAc-Ins) in the mycothiol biosynthesis pathway. This chain is 1D-myo-inositol 2-acetamido-2-deoxy-alpha-D-glucopyranoside deacetylase, found in Corynebacterium efficiens (strain DSM 44549 / YS-314 / AJ 12310 / JCM 11189 / NBRC 100395).